Consider the following 179-residue polypeptide: Large ribosomal subunit protein uL5 (179 aa).

This sequence belongs to the universal ribosomal protein uL5 family. As to quaternary structure, part of the 50S ribosomal subunit; part of the 5S rRNA/L5/L18/L25 subcomplex. Contacts the 5S rRNA and the P site tRNA. Forms a bridge to the 30S subunit in the 70S ribosome.

Its function is as follows. This is one of the proteins that bind and probably mediate the attachment of the 5S RNA into the large ribosomal subunit, where it forms part of the central protuberance. In the 70S ribosome it contacts protein S13 of the 30S subunit (bridge B1b), connecting the 2 subunits; this bridge is implicated in subunit movement. Contacts the P site tRNA; the 5S rRNA and some of its associated proteins might help stabilize positioning of ribosome-bound tRNAs. This Shewanella putrefaciens (strain CN-32 / ATCC BAA-453) protein is Large ribosomal subunit protein uL5.